The chain runs to 422 residues: Serine protease HTRA2, mitochondrial (422 aa).

The transit peptide at 1–17 (MALRGCHRLEVIFKRCI) directs the protein to the mitochondrion. Positions 18–74 (ASPVLHSQAGNRRSSQLAIKGVDPNSNGNSGQYQQNGEHKEKGWRRLVRFFVPFSLG) are excised as a propeptide. Residues 33 to 55 (QLAIKGVDPNSNGNSGQYQQNGE) are disordered. Positions 42–53 (NSNGNSGQYQQN) are enriched in low complexity. The chain crosses the membrane as a helical span at residues 64 to 82 (LVRFFVPFSLGAAVSAAII). 2 consecutive short sequence motifs (IAP-binding) follow at residues 75–78 (AAVS) and 94–97 (SKMT). Residues 139–302 (SNGSGFIIEQ…IPIDYVKVFL (164 aa)) form a serine protease region. Residues His157, Asp189, and Ser266 each act as charge relay system in the active site. One can recognise a PDZ domain in the interval 325 to 410 (MGITMLTLTP…TLDIVILRGV (86 aa)).

This sequence belongs to the peptidase S1C family. As to quaternary structure, interacts with th/DIAP1 (via BIR 2 domain).

The protein resides in the mitochondrion intermembrane space. Its subcellular location is the mitochondrion membrane. It carries out the reaction Cleavage of non-polar aliphatic amino-acids at the P1 position, with a preference for Val, Ile and Met. At the P2 and P3 positions, Arg is selected most strongly with a secondary preference for other hydrophilic residues.. Its function is as follows. Serine protease that shows proteolytic activity against a non-specific substrate beta-casein. Promotes or induces cell death either by direct binding to and inhibition of BIRC proteins (also called inhibitor of apoptosis proteins, IAPs), leading to an increase in caspase activity, or by a BIRC inhibition-independent, caspase-independent and serine protease activity-dependent mechanism. Can antagonize antiapoptotic activity of th/Diap1 by directly inducing the degradation of th/Diap1. This Drosophila simulans (Fruit fly) protein is Serine protease HTRA2, mitochondrial.